The primary structure comprises 502 residues: MFCLPQQESTAPTTCTGSASTQDMDSGYGDGLQGECLRKPDQTQPKLYGVGDPTATFSSDSSCLSSRGRVIKWFWDSAEEGYRTYHMDEYDEDKNPSGIINLGTSENKLCFDLLSWRLTQGDMLHVEPSLLQYPDWRGHLFLREEVAKFLSFYCKSPAPLKPENVVVLNGCASLFSALATVLCEAGEALLIPTPYYGAITQHIYLYGNVRLAYVYLDSKVTGLNTRPFQLTVEKLEMVLQGVSSEGVKVKGLILINPQNPLGDVYSPEELQDFLRFAMRHKLHVIMDEVYMLSVFEESLGYRSVLSLERLPDPQRTHVMWATSKDFGMSGLRFGVLYTENQHVATAVASLCRYHGLSGLVQHQMAQLLRDHDWISQVYLPENHARLKAAHTYVSEELRALGIPFVSRGAGFFIWVDLRKYLCKGTFEEEALLWRQFLDNKVLLSSGKTFECKEPGWFRVVFSDKENRLRLGMQRMRQVLEGQSQVVEDASPCHAQEPQSQPR.

The disordered stretch occupies residues 1-24; that stretch reads MFCLPQQESTAPTTCTGSASTQDM. E106 is a binding site for substrate. K324 carries the N6-(pyridoxal phosphate)lysine modification.

The protein belongs to the class-I pyridoxal-phosphate-dependent aminotransferase family.

Its function is as follows. Does not catalyze the synthesis of 1-aminocyclopropane-1-carboxylate but is capable of catalyzing the deamination of L-vinylglycine. This is 1-aminocyclopropane-1-carboxylate synthase-like protein 1 (Accs) from Mus musculus (Mouse).